The chain runs to 742 residues: Two pore calcium channel protein 1 (742 aa).

Residues 1 to 37 form a disordered region; the sequence is MSEAEAPLITEEAAERGLASSGSRRLSDGAGGQGSRK. The Cytoplasmic portion of the chain corresponds to 1–82; sequence MSEAEAPLIT…NDTRFGRAMS (82 aa). A helical transmembrane segment spans residues 83–103; that stretch reads FYFVYLRLDWLWSLNLFALIL. At 104–140 the chain is on the extracellular side; sequence LNFLEKPLWCRKDALQAYDQRDLYFLGQLPYFSKTES. A helical membrane pass occupies residues 141-161; the sequence is LIYEGLTLVILVMDIFCPLSY. At 162 to 176 the chain is on the cytoplasmic side; it reads EGLNIFWRSTTNKLK. The chain crosses the membrane as a helical span at residues 177–197; sequence IVLLFILACDILVFAFSSQPF. The Extracellular segment spans residues 198-204; that stretch reads RLAPYIR. Residues 205-226 form a helical; Voltage-sensor membrane-spanning segment; it reads VVFLIMTIRELRMCAITLAGLI. Residues 227 to 247 form a helical membrane-spanning segment; the sequence is GTYLNVLALSLLFLLFASWLA. The Extracellular segment spans residues 248–258; the sequence is YVTFEDTPQGK. The segment at residues 259–273 is an intramembrane region (pore-forming); that stretch reads TIFSSYGVTLYQMFV. Residues 274 to 296 are Extracellular-facing; the sequence is LFTTSNNPDVWVHAYKIPRWYSL. The helical transmembrane segment at 297-317 threads the bilayer; it reads FFIVYVLLGVYFLTNLILAVI. The Cytoplasmic portion of the chain corresponds to 318–446; sequence YDSFKEQFAK…SFVRSRMFEY (129 aa). EF-hand domains lie at 335–370 and 376–411; these read IRKN…LNKY and TSRE…IAIK. A helical membrane pass occupies residues 447 to 467; the sequence is IIVFVLLINLVAVIIETTLDI. Residues 468–480 lie on the Extracellular side of the membrane; sequence ENSSSQETWQEVE. N-linked (GlcNAc...) asparagine glycosylation is present at Asn469. A helical transmembrane segment spans residues 481 to 501; it reads FFLGWIYVAEMALKIFSLGFG. The Cytoplasmic portion of the chain corresponds to 502 to 510; it reads AYWMEGQNK. Residues 511 to 531 traverse the membrane as a helical segment; sequence FDFVLTWTIFIGETLTFAFPS. The Extracellular segment spans residues 532 to 540; it reads KLPFLSNGE. The chain crosses the membrane as a helical; Voltage-sensor span at residues 541-558; it reads WIRYLLLGRVLRLTRILL. Over 559–582 the chain is Cytoplasmic; that stretch reads QVQRFRAFVATFFTLMSSLMPYLG. The chain crosses the membrane as a helical span at residues 583 to 603; that stretch reads IVFCVLCMYCSIGLQIFGGIV. At 604–627 the chain is on the extracellular side; the sequence is YAGNPTLEETDLFNNDYLLFNFND. Residues 628 to 642 constitute an intramembrane region (pore-forming); sequence YPSGMVTLFNLLVMG. Topologically, residues 643–663 are extracellular; the sequence is NWQVWMESYWQLTGTSWSLIY. The chain crosses the membrane as a helical span at residues 664-684; sequence FVSFYLISILLLLNLIVAFVL. The Cytoplasmic segment spans residues 685–742; that stretch reads EAFFAEMELEKGEEVDIQNPTSGGIKKRRSMRVRSKGTMVDILLHHMLSNELDGSQNS.

Belongs to the calcium channel alpha-1 subunit (TC 1.A.1.11) family. Two pore calcium channel subfamily. In terms of assembly, homodimer.

It is found in the membrane. With respect to regulation, inhibited by Al(3+). Functionally, functions as a voltage-gated inward-rectifying Ca(2+) channel (VDCC) across the plasma membrane that mediates sucrose-induced Ca(2+) influx in autotrophically grown leaf cells. Acts as the major ROS-responsive Ca(2+) channel and is the possible target of Al-dependent inhibition. Plays a regulatory role in defense responses. The polypeptide is Two pore calcium channel protein 1 (TPC1) (Triticum aestivum (Wheat)).